A 927-amino-acid polypeptide reads, in one-letter code: Roc-COR-CHAT protease (927 aa).

4 LRR repeats span residues 38 to 61 (AGQVTALSIGNSSLKKLVLGTEAQ), 83 to 107 (LPHLTHLYLNNCAIKDITIPKGFRS), 109 to 125 (QQVYLQKNGLTELVFEG), and 127 to 151 (CPALVLLDVSENQLKGLSFHSGFRA). An LRR 5 region spans residues 152-170 (LKYIYATNNVLQKITFNRS). LRR repeat units lie at residues 171–194 (MRLLNTLHLAKNQLTELAPFLSEI) and 195–217 (ETMETLYLQGNQLLRIDREIWDR). Positions 436–623 (EWLGVKEDLN…ELRWKKGVVL (188 aa)) constitute a COR domain. Catalysis depends on residues His796 and Cys840.

Its function is as follows. A dedicated protease for gasdermin bGSDM; cleaves the bGSDM precursor, releasing the pore-forming moiety, which integrates into the membrane and triggers cell death. Probably involved in defense against bacteriophages. Expression of bGSDM and this neighboring protease is highly toxic in E.coli. Cells expressing the gene pair stop dividing and lose membrane integrity. Both proteins are required to kill E.coli. The bGSDM recognition site is larger than the 8 residues surrounding the cleavage site; replacement of the endogenous recognition site by the Runella site (NRVLGENM) in a number of other bGSDMs is not sufficient for them to be cleaved. This is Roc-COR-CHAT protease from Runella zeae (strain ATCC BAA-293 / DSM 19591 / LMG 21438 / NS12).